We begin with the raw amino-acid sequence, 164 residues long: Large ribosomal subunit protein uL10 (164 aa).

The protein belongs to the universal ribosomal protein uL10 family. As to quaternary structure, part of the ribosomal stalk of the 50S ribosomal subunit. The N-terminus interacts with L11 and the large rRNA to form the base of the stalk. The C-terminus forms an elongated spine to which L12 dimers bind in a sequential fashion forming a multimeric L10(L12)X complex.

Forms part of the ribosomal stalk, playing a central role in the interaction of the ribosome with GTP-bound translation factors. This is Large ribosomal subunit protein uL10 from Pseudoalteromonas translucida (strain TAC 125).